Here is a 145-residue protein sequence, read N- to C-terminus: MRTTFMAKANEVERKWYVVDAEGQTLGRLASEVASILRGKHKPTFTPHVDTGDHVIIINAEKVHLTGNKLNDKIYYRHTQHPGGLKQRTALEMRTNYPVQMLELAIKGMLPKGRLGRQMSKKLNVYAGAEHPHQAQKPEVYELRG.

This sequence belongs to the universal ribosomal protein uL13 family. As to quaternary structure, part of the 50S ribosomal subunit.

Functionally, this protein is one of the early assembly proteins of the 50S ribosomal subunit, although it is not seen to bind rRNA by itself. It is important during the early stages of 50S assembly. The sequence is that of Large ribosomal subunit protein uL13 from Bacillus cytotoxicus (strain DSM 22905 / CIP 110041 / 391-98 / NVH 391-98).